A 331-amino-acid chain; its full sequence is Ornithine lipid hydroxylase OlsE (331 aa).

The next 5 helical transmembrane spans lie at 13-33 (VSSL…YFAF), 37-57 (MHLL…ALFE), 85-105 (GGVQ…ATVA), 120-140 (WPMA…LYMA), and 189-209 (LLGA…FIGL). The Fatty acid hydroxylase domain occupies 126-260 (VVLGLVIAEF…LVIWDQLLGT (135 aa)).

The protein belongs to the sterol desaturase family.

It localises to the cell inner membrane. Its pathway is lipid metabolism. Involved in the biosynthesis of ornithine lipids (OLs), which are phosphorus-free membrane lipids. Is responsible for the hydroxylation of OL within the ornithine moiety. This chain is Ornithine lipid hydroxylase OlsE, found in Rhizobium tropici.